The chain runs to 345 residues: S-adenosylmethionine:tRNA ribosyltransferase-isomerase (345 aa).

The protein belongs to the QueA family. In terms of assembly, monomer.

The protein resides in the cytoplasm. It carries out the reaction 7-aminomethyl-7-carbaguanosine(34) in tRNA + S-adenosyl-L-methionine = epoxyqueuosine(34) in tRNA + adenine + L-methionine + 2 H(+). Its pathway is tRNA modification; tRNA-queuosine biosynthesis. Transfers and isomerizes the ribose moiety from AdoMet to the 7-aminomethyl group of 7-deazaguanine (preQ1-tRNA) to give epoxyqueuosine (oQ-tRNA). This Anaeromyxobacter sp. (strain K) protein is S-adenosylmethionine:tRNA ribosyltransferase-isomerase.